An 80-amino-acid chain; its full sequence is Acyl carrier protein (80 aa).

The Carrier domain occupies 2 to 77; the sequence is KNIEERIKKI…KSIDFIQNKN (76 aa). Ser-37 is subject to O-(pantetheine 4'-phosphoryl)serine.

The protein belongs to the acyl carrier protein (ACP) family. In terms of processing, 4'-phosphopantetheine is transferred from CoA to a specific serine of apo-ACP by AcpS. This modification is essential for activity because fatty acids are bound in thioester linkage to the sulfhydryl of the prosthetic group.

It localises to the cytoplasm. It participates in lipid metabolism; fatty acid biosynthesis. Functionally, carrier of the growing fatty acid chain in fatty acid biosynthesis. The sequence is that of Acyl carrier protein from Buchnera aphidicola subsp. Acyrthosiphon pisum (strain 5A).